The chain runs to 416 residues: CapZ-interacting protein (416 aa).

Disordered regions lie at residues 1-84 (MEER…KSSP) and 98-416 (AALL…DTKM). Polar residues predominate over residues 8 to 20 (TNANVDNSASPSV). Serine 17 is modified (phosphoserine). Serine 68 is subject to Phosphoserine; by MAPK8; in vitro. Serine 82 carries the phosphoserine modification. The residue at position 83 (serine 83) is a Phosphoserine; by MAPK8; in vitro. Residue serine 105 is modified to Phosphoserine. Serine 108 is modified (phosphoserine; by MAPK12 and MAPK13). Serine 116, serine 120, and serine 123 each carry phosphoserine. Position 124 is a phosphothreonine (threonine 124). Serine 126, serine 127, serine 135, and serine 143 each carry phosphoserine. Positions 159–176 (VRTRGSIKRRPPSRRFRR) are enriched in basic residues. Serine 177 is subject to Phosphoserine. Serine 179 carries the phosphoserine; by MAPKAPK2 and MAPKAPK3 modification. Serine 216 is modified (phosphoserine; by MAPK8; in vitro). The region spanning 227–330 (GVRTLGPAEK…RVQNEEVGPE (104 aa)) is the RCSD domain. Serine 244 carries the phosphoserine; by MAPKAPK2 or MAPKAPK3; in vitro modification. The segment covering 244 to 273 (SRTEKQEEDRATEEAKNGEKARRSSEEVDG) has biased composition (basic and acidic residues). Serine 267, serine 268, serine 284, serine 298, and serine 333 each carry phosphoserine. Positions 292–349 (AENRCGSPREEKPAGEEAEMEKATEVKGERVQNEEVGPEHDSQETKKLEEGAAVKETP) are enriched in basic and acidic residues. Phosphothreonine is present on threonine 336. Residue serine 351 is modified to Phosphoserine. Residues 360–372 (DVPKQEKGKEKQQ) show a composition bias toward basic and acidic residues. Residues 382-397 (SPQTGPAQLETSSEVQ) show a composition bias toward polar residues.

As to quaternary structure, interacts with CAPZA2 and CAPZB. Dephosphorylation results in its dissociation from CAPZA2. Highly expressed in skeletal muscle and more weakly in cardiac muscle. Also expressed in several lymphoid organs, including spleen, thymus, peripheral blood leukocytes, lymph node and bone marrow.

Functionally, stress-induced phosphorylation of CAPZIP may regulate the ability of F-actin-capping protein to remodel actin filament assembly. The sequence is that of CapZ-interacting protein (RCSD1) from Homo sapiens (Human).